A 375-amino-acid polypeptide reads, in one-letter code: MLVIPPGLSEEEEALQKKFNKLKKKKKALLALKKQSSSGPASQGGVKRSLSEQPVVDTATATEQAKQLVKSGAISAIKAETKNSGFKRSRTLEGKLKDPEKGPVPTFQPFQRSMSADEDLQEPSRRPQRKSLYESFVSSSDRLRELGQDGEEAEAPGAGDGPPRGFDWSYEEHGSARSSASPPRSRSRDRSHDRSRDRDRDKERDRDRDRDRDRDRDKDKDRDRDRDRDKERDRDRDRDRDRERDREGPFRRSDSFPERRAPRKGNTLYVYGEDMTPTLLRGAFSPFGNIIDLSMDPPRNCAFVTYEKMESADQAVAELNGTQVESVQLKVNIARKQPMLDAATGKSVWGSLAVQNSPKGCHRDKRTQIVYSDDL.

The stretch at 7-36 (GLSEEEEALQKKFNKLKKKKKALLALKKQS) forms a coiled coil. Positions 30–58 (LALKKQSSSGPASQGGVKRSLSEQPVVDT) are disordered. The residue at position 51 (S51) is a Phosphoserine. A Glycyl lysine isopeptide (Lys-Gly) (interchain with G-Cter in SUMO1); alternate cross-link involves residue K78. Residue K78 forms a Glycyl lysine isopeptide (Lys-Gly) (interchain with G-Cter in SUMO2); alternate linkage. A disordered region spans residues 79 to 262 (AETKNSGFKR…SDSFPERRAP (184 aa)). Residue K82 forms a Glycyl lysine isopeptide (Lys-Gly) (interchain with G-Cter in SUMO2) linkage. Basic and acidic residues predominate over residues 90–101 (RTLEGKLKDPEK). Phosphoserine is present on residues S113 and S115. E122 is subject to PolyADP-ribosyl glutamic acid. 2 positions are modified to phosphoserine: S131 and S139. E151 is modified (polyADP-ribosyl glutamic acid). The span at 155–167 (APGAGDGPPRGFD) shows a compositional bias: low complexity. E172 carries the polyADP-ribosyl glutamic acid modification. A phosphoserine mark is found at S179, S181, S185, and S187. 4 consecutive repeat copies span residues 184 to 185 (RS), 186 to 187 (RS), 188 to 189 (RD), and 190 to 191 (RS). The segment at 184–247 (RSRSRDRSHD…RDRDRERDRE (64 aa)) is 32 X 2 AA approximate tandem repeats of R-[DSE]. The span at 186 to 260 (RSRDRSHDRS…RRSDSFPERR (75 aa)) shows a compositional bias: basic and acidic residues. Phosphoserine is present on S191. One copy of the 5; approximate repeat lies at 192–193 (HD). 4 tandem repeats follow at residues 194-195 (RS), 196-197 (RD), 198-199 (RD), and 200-201 (RD). The stretch at 202 to 203 (KE) is one 10; approximate repeat. Tandem repeats lie at residues 204-205 (RD), 206-207 (RD), 208-209 (RD), 210-211 (RD), 212-213 (RD), 214-215 (RD), and 216-217 (RD). Residues 218–219 (KD) form an 18; approximate repeat. One copy of the 19; approximate repeat lies at 220–221 (KD). Repeat copies occupy residues 222–223 (RD), 224–225 (RD), 226–227 (RD), and 228–229 (RD). Residues 230–231 (KE) form a 24; approximate repeat. 8 consecutive repeat copies span residues 232–233 (RD), 234–235 (RD), 236–237 (RD), 238–239 (RD), 240–241 (RD), 242–243 (RE), 244–245 (RD), and 246–247 (RE). 2 positions are modified to phosphoserine: S253 and S255. The RRM domain occupies 266-336 (NTLYVYGEDM…VQLKVNIARK (71 aa)). Phosphothreonine occurs at positions 276 and 278. Phosphoserine occurs at positions 285 and 357.

It belongs to the RRM NELF-E family. The NELF complex is composed of NELFA, NELFB, NELFCD and NELFE. Interacts with NELFB. In terms of processing, phosphorylated by the P-TEFb complex at sites next to its RNA recognition motif, promoting its release from chromatin. Post-translationally, sumoylated. Poly-ADP-ribosylated by PARP1, thereby preventing RNA-binding and relieving transcription pausing.

The protein resides in the nucleus. The protein localises to the chromosome. Functionally, essential component of the NELF complex, a complex that negatively regulates the elongation of transcription by RNA polymerase II. The NELF complex, which acts via an association with the DSIF complex and causes transcriptional pausing, is counteracted by the P-TEFb kinase complex. Provides the strongest RNA binding activity of the NELF complex and may initially recruit the NELF complex to RNA. This chain is Negative elongation factor E (Nelfe), found in Mus musculus (Mouse).